Consider the following 73-residue polypeptide: UPF0270 protein SG2298 (73 aa).

Belongs to the UPF0270 family.

In Sodalis glossinidius (strain morsitans), this protein is UPF0270 protein SG2298.